The following is a 473-amino-acid chain: LEC14B protein (473 aa).

WD repeat units lie at residues 212-242, 254-285, 301-331, 377-413, and 425-455; these read GYSFGVFSIKFSTDGREIVAGTSDESICVYD, AHESDVNSVCFADESGHLIYSGSDDNLCKVWD, GHLEGITFIDSRGDGRYFISNGKDQTIKLWD, GHSVLCTLIRCYFSPDYSTGQKYIYTGSHDANVYIYD, and YHKATVRDCSWHPNYPMLVSSSFDGEIVKWE.

The protein belongs to the WD repeat LEC14B family.

In Lithospermum erythrorhizon (Purple gromwell), this protein is LEC14B protein.